A 142-amino-acid chain; its full sequence is Large ribosomal subunit protein uL13 (142 aa).

This sequence belongs to the universal ribosomal protein uL13 family. In terms of assembly, part of the 50S ribosomal subunit.

Its function is as follows. This protein is one of the early assembly proteins of the 50S ribosomal subunit, although it is not seen to bind rRNA by itself. It is important during the early stages of 50S assembly. The protein is Large ribosomal subunit protein uL13 of Salmonella agona (strain SL483).